The following is a 156-amino-acid chain: Small ribosomal subunit protein uS7 (156 aa).

It belongs to the universal ribosomal protein uS7 family. As to quaternary structure, part of the 30S ribosomal subunit. Contacts proteins S9 and S11.

Its function is as follows. One of the primary rRNA binding proteins, it binds directly to 16S rRNA where it nucleates assembly of the head domain of the 30S subunit. Is located at the subunit interface close to the decoding center, probably blocks exit of the E-site tRNA. The polypeptide is Small ribosomal subunit protein uS7 (Burkholderia ambifaria (strain MC40-6)).